The sequence spans 77 residues: MNRIIFCTFFKKKSEGQDFQSYPGKLGKKIYDQISKKAWEKWIEKQTILINEENLNMFNLEHRKKIEKYMKLFLFKK.

The protein belongs to the Fe(2+)-trafficking protein family. As to quaternary structure, monomer.

Functionally, could be a mediator in iron transactions between iron acquisition and iron-requiring processes, such as synthesis and/or repair of Fe-S clusters in biosynthetic enzymes. In Buchnera aphidicola subsp. Acyrthosiphon pisum (strain APS) (Acyrthosiphon pisum symbiotic bacterium), this protein is Probable Fe(2+)-trafficking protein.